The primary structure comprises 321 residues: AA9 family lytic polysaccharide monooxygenase A (321 aa).

Positions 1–21 (MFRAQSFLPVLALVLRVAAHG) are cleaved as a signal peptide. Cu(2+) is bound at residue histidine 20. Cysteines 71 and 197 form a disulfide. An N-linked (GlcNAc...) asparagine glycan is attached at asparagine 72. Histidine 105 is a Cu(2+) binding site. Residue asparagine 157 is glycosylated (N-linked (GlcNAc...) asparagine). Residues histidine 183 and glutamine 192 each contribute to the O2 site. Tyrosine 194 is a Cu(2+) binding site. The disordered stretch occupies residues 278-306 (SSSAAATQSSSAAPSSSAIGTSTASSAAA). Residue serine 293 is the site of GPI-anchor amidated serine attachment. Positions 294 to 321 (SAIGTSTASSAAASGTAIVDANTCMNSA) are cleaved as a propeptide — removed in mature form.

The protein belongs to the polysaccharide monooxygenase AA9 family. Cu(2+) is required as a cofactor.

It is found in the cell membrane. The enzyme catalyses [(1-&gt;4)-beta-D-glucosyl]n+m + reduced acceptor + O2 = 4-dehydro-beta-D-glucosyl-[(1-&gt;4)-beta-D-glucosyl]n-1 + [(1-&gt;4)-beta-D-glucosyl]m + acceptor + H2O.. Functionally, lytic polysaccharide monooxygenase (LPMO) that depolymerizes crystalline and amorphous polysaccharides via the oxidation of scissile alpha- or beta-(1-4)-glycosidic bonds, yielding C1 or C4 oxidation products. Catalysis by LPMOs requires the reduction of the active-site copper from Cu(II) to Cu(I) by a reducing agent and H(2)O(2) or O(2) as a cosubstrate. Has broad specificity, cleaving at any position along the beta-glucan backbone of xyloglucan, regardless of substitutions. Shows minor activity on glucomannan. This Gloeophyllum trabeum (strain ATCC 11539 / FP-39264 / Madison 617) (Brown rot fungus) protein is AA9 family lytic polysaccharide monooxygenase A.